The chain runs to 2365 residues: TRIO and F-actin-binding protein (2365 aa).

Disordered stretches follow at residues 48–1106, 1168–1554, 1593–1667, and 1679–1751; these read VPYC…HEPL, HRDA…SERR, LPRK…WPKI, and AGLE…TSWR. Over residues 132–151 the composition is skewed to low complexity; sequence SDPTSSPDSATPDDTSNSSS. His221 carries the phosphothreonine modification. Polar residues-rich tracts occupy residues 239–271, 291–375, 403–422, 429–471, 478–520, 527–569, 576–618, 625–650, 661–674, 683–701, 709–722, 745–785, and 807–837; these read TLTQASSMTPHSGPRSTTSQASPAQRDTAQAAS, RASS…TPQR, RTSCAQRDNPKASRTSSPNR, RTSC…SPNR, RTSCAQRDNPRASSPNRTTQQDSPRT, SSPNRTIQQENPRT, RASSPSRTIQQENPRTSCA, SSPNRTTQQENPRT, and IRATQQDNPRTCIQQNIPRSSSTQQDNPKTS. Positions 324-348 are essentiel for its aggregation; that stretch reads STQEDTPRASSTQWNTPRASSPSRS. Gln457 carries the phosphothreonine modification. Basic and acidic residues predominate over residues 839–854; sequence TKRDNLRPTCTQRDRT. Composition is skewed to polar residues over residues 855-898, 913-927, and 945-994; these read QSFS…SSPH, PTQSDGPRTSSPSRS, and DRPQ…TSSP. The segment covering 1045–1056 has biased composition (basic and acidic residues); sequence RAPESEPPHHEP. Residues 1195–1206 show a composition bias toward polar residues; that stretch reads SMESLAPSTDSL. Composition is skewed to basic and acidic residues over residues 1260–1270 and 1303–1319; these read ETRHNLEREEY and GRAEVERLFGQERRKSE. The span at 1332-1349 shows a compositional bias: low complexity; it reads SQQPSQGQSQLLRRQSSP. Composition is skewed to basic and acidic residues over residues 1378-1387 and 1402-1411; these read SPEKRPEGDR and TPERELRTQR. Gly residues predominate over residues 1452–1461; that stretch reads GGLGPGGWWG. Basic and acidic residues predominate over residues 1494 to 1508; that stretch reads WEEKPTHELPRELGK. The span at 1524 to 1534 shows a compositional bias: polar residues; sequence ESSQSWHSGTP. Residues 1594 to 1606 show a composition bias toward basic and acidic residues; the sequence is PRKDPAGHRDDLA. A compositionally biased stretch (polar residues) spans 1645–1664; the sequence is ALQSQSPVQLPSPACTSTQW. Low complexity predominate over residues 1696-1705; sequence PSLPELQFQP. The segment covering 1724 to 1735 has biased composition (basic and acidic residues); sequence KQADSADKRPAE. In terms of domain architecture, PH spans 1778–1887; it reads LNFKKGWMSI…WIEALRKTVR (110 aa). Phosphoserine is present on Ser1796. Disordered regions lie at residues 1889–2017 and 2174–2194; these read TSAP…LTED and LSKTRSLQQGPDGLRKQHQSD. At Arg1930 the chain carries Omega-N-methylarginine. Phosphoserine occurs at positions 1949 and 1955. Basic and acidic residues predominate over residues 1965–1997; sequence TPDRLAKQEELERDLAQRSEERRKWFEATDSRT. Coiled coils occupy residues 2062–2247 and 2281–2361; these read SDGH…NQEL and ELEV…SMRN.

In terms of assembly, isoform 1 forms aggregates. Isoform 1 binds to TRIO and F-actin. Isoform 1 may also interact with myosin II. Interacts with HECTD3. Interacts with PJVK. Interacts with TERF1; mediates TERF1 localization to the centrosome. In terms of processing, ubiquitinated by HECTD3, leading to its degradation by the proteasome. Post-translationally, phosphorylation at Thr-457 by PLK1 ensures mitotic progression and is essential for accurate chromosome segregation. Phosphorylation at residues Thr-221 and Thr-457 by kinase NEK2A and PLK1 coordinates TERF1 translocation from telomere to spindle pole. As to expression, widely expressed. Highly expressed in heart and placenta. In terms of tissue distribution, expressed in fetal brain, retina and cochlea but is not detectable in the other tissues.

It localises to the nucleus. Its subcellular location is the cytoplasm. The protein resides in the cytoskeleton. It is found in the microtubule organizing center. The protein localises to the centrosome. It localises to the midbody. Its subcellular location is the chromosome. The protein resides in the telomere. Functionally, regulates actin cytoskeletal organization, cell spreading and cell contraction by directly binding and stabilizing filamentous F-actin and prevents its depolymerization. May also serve as a linker protein to recruit proteins required for F-actin formation and turnover. Essential for correct mitotic progression. In terms of biological role, plays a pivotal role in the formation of stereocilia rootlets. In Homo sapiens (Human), this protein is TRIO and F-actin-binding protein (TRIOBP).